The chain runs to 207 residues: Holliday junction branch migration complex subunit RuvA (207 aa).

The interval 1–65 (MYDYIRGILT…ETEHVLYGFS (65 aa)) is domain I. Residues 66–144 (SRRERECFRM…DLLPLDSKAI (79 aa)) form a domain II region. A flexible linker region spans residues 145 to 155 (ASWESVKPSCM). The interval 155-207 (MDEGIQALAALGYSKPSAERMIAEAMSELPENASLAEILPIALKKNLQGLNKS) is domain III.

Belongs to the RuvA family. As to quaternary structure, homotetramer. Forms an RuvA(8)-RuvB(12)-Holliday junction (HJ) complex. HJ DNA is sandwiched between 2 RuvA tetramers; dsDNA enters through RuvA and exits via RuvB. An RuvB hexamer assembles on each DNA strand where it exits the tetramer. Each RuvB hexamer is contacted by two RuvA subunits (via domain III) on 2 adjacent RuvB subunits; this complex drives branch migration. In the full resolvosome a probable DNA-RuvA(4)-RuvB(12)-RuvC(2) complex forms which resolves the HJ.

Its subcellular location is the cytoplasm. In terms of biological role, the RuvA-RuvB-RuvC complex processes Holliday junction (HJ) DNA during genetic recombination and DNA repair, while the RuvA-RuvB complex plays an important role in the rescue of blocked DNA replication forks via replication fork reversal (RFR). RuvA specifically binds to HJ cruciform DNA, conferring on it an open structure. The RuvB hexamer acts as an ATP-dependent pump, pulling dsDNA into and through the RuvAB complex. HJ branch migration allows RuvC to scan DNA until it finds its consensus sequence, where it cleaves and resolves the cruciform DNA. The chain is Holliday junction branch migration complex subunit RuvA from Chlamydia caviae (strain ATCC VR-813 / DSM 19441 / 03DC25 / GPIC) (Chlamydophila caviae).